The chain runs to 376 residues: Protein FhaE (376 aa).

The N-terminal stretch at 1–37 is a signal peptide; the sequence is MSQIFADRRAAVPARVISFCGAALAVWAGLAVQPAMA.

In Bordetella pertussis (strain Tohama I / ATCC BAA-589 / NCTC 13251), this protein is Protein FhaE (fhaE).